The primary structure comprises 1488 residues: Chromosome partition protein MukB (1488 aa).

Position 34 to 41 (34 to 41 (GGNGAGKS)) interacts with ATP. 3 coiled-coil regions span residues 326 to 418 (LEAD…QYNQ), 444 to 472 (LDTF…QTAH), and 509 to 602 (RHLA…QRAP). The tract at residues 666–783 (PGGAEDQRLN…SLPIFGRAAR (118 aa)) is flexible hinge. 3 coiled-coil regions span residues 835–923 (EAEI…AKLE), 977–1116 (EMLS…AKAG), and 1209–1265 (VEAI…LQSV). A disordered region spans residues 1049–1074 (ADSGAEERARQRRDELHAQLSNNRSR). Positions 1051-1065 (SGAEERARQRRDELH) are enriched in basic and acidic residues.

It belongs to the SMC family. MukB subfamily. Homodimerization via its hinge domain. Binds to DNA via its C-terminal region. Interacts, and probably forms a ternary complex, with MukE and MukF via its C-terminal region. The complex formation is stimulated by calcium or magnesium. Interacts with tubulin-related protein FtsZ.

It is found in the cytoplasm. It localises to the nucleoid. Plays a central role in chromosome condensation, segregation and cell cycle progression. Functions as a homodimer, which is essential for chromosome partition. Involved in negative DNA supercoiling in vivo, and by this means organize and compact chromosomes. May achieve or facilitate chromosome segregation by condensation DNA from both sides of a centrally located replisome during cell division. In Salmonella schwarzengrund (strain CVM19633), this protein is Chromosome partition protein MukB.